Consider the following 123-residue polypeptide: Small ribosomal subunit protein uS13 (123 aa).

Positions 93-123 are disordered; it reads HRKGLPVRGQNTKNNARTRKGPAKAIAGKKK. The span at 108–123 shows a compositional bias: basic residues; it reads ARTRKGPAKAIAGKKK.

Belongs to the universal ribosomal protein uS13 family. In terms of assembly, part of the 30S ribosomal subunit. Forms a loose heterodimer with protein S19. Forms two bridges to the 50S subunit in the 70S ribosome.

Functionally, located at the top of the head of the 30S subunit, it contacts several helices of the 16S rRNA. In the 70S ribosome it contacts the 23S rRNA (bridge B1a) and protein L5 of the 50S subunit (bridge B1b), connecting the 2 subunits; these bridges are implicated in subunit movement. Contacts the tRNAs in the A and P-sites. The polypeptide is Small ribosomal subunit protein uS13 (Leuconostoc citreum (strain KM20)).